We begin with the raw amino-acid sequence, 428 residues long: Leucine-rich repeat-containing protein 42 (428 aa).

LRR repeat units follow at residues 149–170, 174–195, 202–222, 234–255, and 259–280; these read VLCS…EEIK, ELTC…LEHL, SVTQ…RKMT, NLSL…GYLF, and KLNC…KHKL. The segment at 379 to 412 is disordered; sequence KHEALSSQESKKSKKRAFEEPEKEQGSSSQTSKQ. The segment covering 394–403 has biased composition (basic and acidic residues); the sequence is RAFEEPEKEQ. Ser406 and Ser407 each carry phosphoserine.

The protein belongs to the LRRC42 family.

In Bos taurus (Bovine), this protein is Leucine-rich repeat-containing protein 42 (LRRC42).